Consider the following 727-residue polypeptide: Centrosomal protein kizuna (727 aa).

The tract at residues 1 to 20 (MTERSGRGGGTRGASALPSP) is disordered. The stretch at 77-124 (KNARIRNQEYLKQFERIQANITASLEKLQELKIEFETQIKKMQLLSKD) forms a coiled coil. Disordered stretches follow at residues 176 to 226 (DFTT…NKSD), 271 to 456 (EGKK…FTNL), and 564 to 727 (RLAV…PRTP). Residues 198-223 (HQQTAQSSDVTGSRVVQTPGDTQCLN) are compositionally biased toward polar residues. Over residues 286–324 (LSPENRTTDLKCDSSRRSEGSEGEILTREHIEVEEERAR) the composition is skewed to basic and acidic residues. S328 is modified (phosphoserine). Residues 343–359 (PQEKPPARKASSDHLPC) show a composition bias toward basic and acidic residues. Low complexity predominate over residues 380–390 (LSSSSDLTVSV). T387 is subject to Phosphothreonine; by PLK1. A compositionally biased stretch (polar residues) spans 442-455 (APSTPDSPNESFTN). Positions 569–583 (SSKSSCSLPSTPSDE) are enriched in low complexity. The segment covering 603–613 (QEDESREESTE) has biased composition (acidic residues). A compositionally biased stretch (polar residues) spans 631–642 (LKQSALQGSTHQ). 2 stretches are compositionally biased toward low complexity: residues 659-669 (GLKTGSGTFKT) and 677-689 (SEASFSSSEGSPL). Phosphoserine is present on residues S711, S714, and S716.

Belongs to the kizuna family. Interacts with AKAP9, CEP72, ODF2, PCNT and TUBGCP2. Post-translationally, phosphorylation at Thr-387 by PLK1 is not needed for centrosomal localization or pericentriolar material expansion but is indispensable for spindle-pole stabilization.

It localises to the cytoplasm. Its subcellular location is the cytoskeleton. The protein resides in the microtubule organizing center. It is found in the centrosome. The protein localises to the cilium basal body. In terms of biological role, centrosomal protein required for establishing a robust mitotic centrosome architecture that can endure the forces that converge on the centrosomes during spindle formation. Required for stabilizing the expanded pericentriolar material around the centriole. This is Centrosomal protein kizuna (KIZ) from Bos taurus (Bovine).